The following is a 156-amino-acid chain: ATP synthase subunit b', organellar chromatophore (156 aa).

A helical membrane pass occupies residues 23–43 (TLPLMAIQVVFLTFILNAIFF).

Belongs to the ATPase B chain family. F-type ATPases have 2 components, F(1) - the catalytic core - and F(0) - the membrane proton channel. F(1) has five subunits: alpha(3), beta(3), gamma(1), delta(1), epsilon(1). F(0) has four main subunits: a(1), b(1), b'(1) and c(10-14). The alpha and beta chains form an alternating ring which encloses part of the gamma chain. F(1) is attached to F(0) by a central stalk formed by the gamma and epsilon chains, while a peripheral stalk is formed by the delta, b and b' chains.

The protein localises to the plastid. It is found in the organellar chromatophore thylakoid membrane. Its function is as follows. F(1)F(0) ATP synthase produces ATP from ADP in the presence of a proton or sodium gradient. F-type ATPases consist of two structural domains, F(1) containing the extramembraneous catalytic core and F(0) containing the membrane proton channel, linked together by a central stalk and a peripheral stalk. During catalysis, ATP synthesis in the catalytic domain of F(1) is coupled via a rotary mechanism of the central stalk subunits to proton translocation. In terms of biological role, component of the F(0) channel, it forms part of the peripheral stalk, linking F(1) to F(0). The b'-subunit is a diverged and duplicated form of b found in plants and photosynthetic bacteria. In Paulinella chromatophora, this protein is ATP synthase subunit b', organellar chromatophore.